A 192-amino-acid chain; its full sequence is Probable metallophosphoesterase MJ0623 (192 aa).

Residues aspartate 41, histidine 43, aspartate 70, asparagine 92, histidine 115, histidine 144, and histidine 146 each coordinate a divalent metal cation.

The protein belongs to the metallophosphoesterase superfamily. YfcE family. Requires a divalent metal cation as cofactor.

The sequence is that of Probable metallophosphoesterase MJ0623 from Methanocaldococcus jannaschii (strain ATCC 43067 / DSM 2661 / JAL-1 / JCM 10045 / NBRC 100440) (Methanococcus jannaschii).